We begin with the raw amino-acid sequence, 616 residues long: MIVVQTLFIHIYQIQFVITRRYRIVNQTILNRVKTRVMHQLVSSLIYENIVVYKASYQDGVGHFTIEGHDSEYRFTAEKTHSFDRIRITSPIERVVGDEADTTTDYTQLLREVVFTFPKNDEKLEQFIVELLQTELKDTQSMQYRESNPPATPETFNDYEFYAMEGHQYHPSYKSRLGFTLSDNLKFGPDFVPNVKLQWLAIDKDKVETTVSRNVVVNEMLRQQVGDKTYEHFVQQIEASGKHVNDVEMIPVHPWQFEHVIQVDLAEERLNGTVLWLGESDELYHPQQSIRTMSPIDTTKYYLKVPISITNTSTKRVLAPHTIENAAQITDWLKQIQQQDMYLKDELKTVFLGEVLGQSYLNTQLSPYKQTQVYGALGVIWRENIYHMLIDEEDAIPFNALYASDKDGVPFIENWIKQYGSEAWTKQFLAVAIRPMIHMLYYHGIAFESHAQNMMLIHENGWPTRIALKDFHDGVRFKREHLSEAASHLTLKPMPEAHKKVNSNSFIETDDERLVRDFLHDAFFFINIAEIILFIEKQYGIDEELQWQWVKGIIEAYQEAFPELNNYQHFDLFEPTIQVEKLTTRRLLSDSELRIHHVTNPLGVGGINDATTISET.

The protein belongs to the IucA/IucC family. Forms a mixture of monomer and dimer in solution.

It carries out the reaction 2-[(2-aminoethylcarbamoyl)methyl]-2-hydroxybutanedioate + (S)-2,3-diaminopropanoate + ATP = 2-[(L-alanin-3-ylcarbamoyl)methyl]-3-(2-aminoethylcarbamoyl)-2-hydroxypropanoate + AMP + diphosphate. It participates in siderophore biosynthesis. Its function is as follows. Catalyzes the condensation of L-2,3-diaminopropionic acid (L-Dap) and citryl-diaminoethane to form L-2,3-diaminopropionyl-citryl-diaminoethane, the third step in staphyloferrin B biosynthesis. The polypeptide is 2-[(L-alanin-3-ylcarbamoyl)methyl]-3-(2-aminoethylcarbamoyl)-2-hydroxypropanoate synthase (Staphylococcus aureus (strain NCTC 8325 / PS 47)).